Consider the following 226-residue polypeptide: 2-C-methyl-D-erythritol 4-phosphate cytidylyltransferase (226 aa).

This sequence belongs to the IspD/TarI cytidylyltransferase family. IspD subfamily.

The catalysed reaction is 2-C-methyl-D-erythritol 4-phosphate + CTP + H(+) = 4-CDP-2-C-methyl-D-erythritol + diphosphate. It functions in the pathway isoprenoid biosynthesis; isopentenyl diphosphate biosynthesis via DXP pathway; isopentenyl diphosphate from 1-deoxy-D-xylulose 5-phosphate: step 2/6. Its function is as follows. Catalyzes the formation of 4-diphosphocytidyl-2-C-methyl-D-erythritol from CTP and 2-C-methyl-D-erythritol 4-phosphate (MEP). This is 2-C-methyl-D-erythritol 4-phosphate cytidylyltransferase from Bacillus thuringiensis (strain Al Hakam).